Here is a 304-residue protein sequence, read N- to C-terminus: Acetylglutamate kinase (304 aa).

Substrate-binding positions include 82–83, R104, and N197; that span reads GG.

The protein belongs to the acetylglutamate kinase family. ArgB subfamily.

The protein resides in the cytoplasm. It carries out the reaction N-acetyl-L-glutamate + ATP = N-acetyl-L-glutamyl 5-phosphate + ADP. It functions in the pathway amino-acid biosynthesis; L-arginine biosynthesis; N(2)-acetyl-L-ornithine from L-glutamate: step 2/4. Its function is as follows. Catalyzes the ATP-dependent phosphorylation of N-acetyl-L-glutamate. The polypeptide is Acetylglutamate kinase (Prochlorococcus marinus (strain NATL1A)).